Reading from the N-terminus, the 297-residue chain is Nicotinate-nucleotide pyrophosphorylase [carboxylating] (297 aa).

Positions L8–P12 are important for hexamer formation. Residues R102, R138 to K139, H160 to R161, K171, E201, D222, S248 to G250, and G270 contribute to the quinolinate site.

The protein belongs to the NadC/ModD family. Hexamer formed by 3 homodimers.

It catalyses the reaction nicotinate beta-D-ribonucleotide + CO2 + diphosphate = quinolinate + 5-phospho-alpha-D-ribose 1-diphosphate + 2 H(+). The protein operates within cofactor biosynthesis; NAD(+) biosynthesis; nicotinate D-ribonucleotide from quinolinate: step 1/1. Its activity is regulated as follows. Activity toward QA is slightly repressed by phosphoribosylpyrophosphate (PRPP) in both a competitive and a non-competitive manner. Competitively inhibited by phthalic acid (PHT). Involved in the catabolism of quinolinic acid (QA). The protein is Nicotinate-nucleotide pyrophosphorylase [carboxylating] (QPRT) of Homo sapiens (Human).